Reading from the N-terminus, the 395-residue chain is Acid ceramidase (395 aa).

The first 20 residues, M1–V20, serve as a signal peptide directing secretion. C31 and C340 are disulfide-bonded. C143 functions as the Nucleophile in the catalytic mechanism. N195, N259, N286, and N342 each carry an N-linked (GlcNAc...) asparagine glycan. Residues C388 and C392 are joined by a disulfide bond.

This sequence belongs to the acid ceramidase family. Heterodimer; disulfide-linked. The heterodimer is composed of the disulfide-linked alpha and beta chains produced by autocatalytic cleavage of the precursor. Post-translationally, N-glycosylated. Proteolytically cleaved into two chains alpha and beta that remain associated via a disulfide bond. Cleavage gives rise to a conformation change that activates the enzyme. The same catalytic Cys residue mediates the autoproteolytic cleavage and subsequent hydrolysis of lipid substrates. The beta chain may undergo an additional C-terminal processing.

The protein resides in the lysosome. Its subcellular location is the secreted. The enzyme catalyses an N-acylsphing-4-enine + H2O = sphing-4-enine + a fatty acid. It catalyses the reaction N-dodecanoylsphing-4-enine + H2O = dodecanoate + sphing-4-enine. The catalysed reaction is N-tetradecanoylsphing-4-enine + H2O = tetradecanoate + sphing-4-enine. It carries out the reaction N-hexadecanoylsphing-4-enine + H2O = sphing-4-enine + hexadecanoate. The enzyme catalyses N-octadecanoylsphing-4-enine + H2O = sphing-4-enine + octadecanoate. It catalyses the reaction N-dodecanoyl-(4R)-hydroxysphinganine + H2O = (4R)-hydroxysphinganine + dodecanoate. The catalysed reaction is N-(dodecanoyl)-sphinganine + H2O = dodecanoate + sphinganine. It carries out the reaction N-(acetyl)-sphing-4-enine + H2O = sphing-4-enine + acetate. The enzyme catalyses N-(hexanoyl)sphing-4-enine + H2O = hexanoate + sphing-4-enine. It catalyses the reaction N-octanoylsphing-4-enine + H2O = octanoate + sphing-4-enine. The catalysed reaction is N-(9Z-octadecenoyl)-sphing-4-enine + H2O = sphing-4-enine + (9Z)-octadecenoate. It carries out the reaction N-dodecanoylethanolamine + H2O = dodecanoate + ethanolamine. It participates in lipid metabolism; sphingolipid metabolism. In terms of biological role, lysosomal ceramidase that hydrolyzes sphingolipid ceramides into sphingosine and free fatty acids at acidic pH. Ceramides, sphingosine, and its phosphorylated form sphingosine-1-phosphate are bioactive lipids that mediate cellular signaling pathways regulating several biological processes including cell proliferation, apoptosis and differentiation. Has a higher catalytic efficiency towards C12-ceramides versus other ceramides. Also catalyzes the reverse reaction allowing the synthesis of ceramides from fatty acids and sphingosine. For the reverse synthetic reaction, the natural sphingosine D-erythro isomer is more efficiently utilized as a substrate compared to D-erythro-dihydrosphingosine and D-erythro-phytosphingosine, while the fatty acids with chain lengths of 12 or 14 carbons are the most efficiently used. Also has an N-acylethanolamine hydrolase activity. By regulating the levels of ceramides, sphingosine and sphingosine-1-phosphate in the epidermis, mediates the calcium-induced differentiation of epidermal keratinocytes. Also indirectly regulates tumor necrosis factor/TNF-induced apoptosis. By regulating the intracellular balance between ceramides and sphingosine, in adrenocortical cells, probably also acts as a regulator of steroidogenesis. The polypeptide is Acid ceramidase (Bos taurus (Bovine)).